The following is a 168-amino-acid chain: Large ribosomal subunit protein uL10 (168 aa).

Belongs to the universal ribosomal protein uL10 family. In terms of assembly, part of the ribosomal stalk of the 50S ribosomal subunit. The N-terminus interacts with L11 and the large rRNA to form the base of the stalk. The C-terminus forms an elongated spine to which L12 dimers bind in a sequential fashion forming a multimeric L10(L12)X complex.

Functionally, forms part of the ribosomal stalk, playing a central role in the interaction of the ribosome with GTP-bound translation factors. The protein is Large ribosomal subunit protein uL10 of Acidovorax ebreus (strain TPSY) (Diaphorobacter sp. (strain TPSY)).